The primary structure comprises 101 residues: Integration host factor subunit beta (101 aa).

The tract at residues 57–77 is disordered; sequence PARAGRNPRTGAHVPVDQKSV.

The protein belongs to the bacterial histone-like protein family. Heterodimer of an alpha and a beta chain.

In terms of biological role, this protein is one of the two subunits of integration host factor, a specific DNA-binding protein that functions in genetic recombination as well as in transcriptional and translational control. In Rhodopseudomonas palustris (strain HaA2), this protein is Integration host factor subunit beta.